Here is a 410-residue protein sequence, read N- to C-terminus: Arginine deiminase (410 aa).

Cysteine 400 functions as the Amidino-cysteine intermediate in the catalytic mechanism.

Belongs to the arginine deiminase family.

Its subcellular location is the cytoplasm. It carries out the reaction L-arginine + H2O = L-citrulline + NH4(+). The protein operates within amino-acid degradation; L-arginine degradation via ADI pathway; carbamoyl phosphate from L-arginine: step 1/2. The chain is Arginine deiminase from Bacillus cytotoxicus (strain DSM 22905 / CIP 110041 / 391-98 / NVH 391-98).